A 329-amino-acid chain; its full sequence is Glycerol-3-phosphate dehydrogenase [NAD(P)+] (329 aa).

Residues S10, W11, R31, and K105 each coordinate NADPH. Residues K105, G134, and S136 each coordinate sn-glycerol 3-phosphate. A138 contributes to the NADPH binding site. Sn-glycerol 3-phosphate-binding residues include K189, D242, S252, R253, and N254. The active-site Proton acceptor is the K189. Residue R253 coordinates NADPH. V277 and E279 together coordinate NADPH.

This sequence belongs to the NAD-dependent glycerol-3-phosphate dehydrogenase family.

The protein resides in the cytoplasm. It carries out the reaction sn-glycerol 3-phosphate + NAD(+) = dihydroxyacetone phosphate + NADH + H(+). The catalysed reaction is sn-glycerol 3-phosphate + NADP(+) = dihydroxyacetone phosphate + NADPH + H(+). It participates in membrane lipid metabolism; glycerophospholipid metabolism. In terms of biological role, catalyzes the reduction of the glycolytic intermediate dihydroxyacetone phosphate (DHAP) to sn-glycerol 3-phosphate (G3P), the key precursor for phospholipid synthesis. The protein is Glycerol-3-phosphate dehydrogenase [NAD(P)+] of Neisseria meningitidis serogroup A / serotype 4A (strain DSM 15465 / Z2491).